The sequence spans 484 residues: Ureidoglycolate hydrolase (484 aa).

The N-terminal stretch at 1–28 (MATSAAARFLAALAGAAVLLVLLGGAAG) is a signal peptide. 4 residues coordinate Mn(2+): histidine 148, aspartate 159, glutamate 194, and histidine 262. Substrate stretches follow at residues 193 to 194 (EE) and 262 to 265 (HIEQ). The segment at 284–399 (APASIKVEFE…LSEFKIINQD (116 aa)) is involved in dimerization. Residues histidine 298, asparagine 348, and arginine 361 each coordinate substrate. The tract at residues 431 to 432 (YH) is substrate. Histidine 456 provides a ligand contact to Mn(2+). Histidine 456 serves as a coordination point for substrate.

The protein belongs to the peptidase M20 family. As to quaternary structure, homodimer. Mn(2+) serves as cofactor. Ni(2+) is required as a cofactor. The cofactor is Co(2+).

It localises to the endoplasmic reticulum. It carries out the reaction (S)-ureidoglycolate + H2O + 2 H(+) = glyoxylate + 2 NH4(+) + CO2. Its pathway is nitrogen metabolism; (S)-allantoin degradation; glyoxylate from (S)-ureidoglycolate: step 1/1. In terms of biological role, involved in the catabolism of purine nucleotides. The sequential activity of AAH, UGLYAH and UAH allows a complete purine breakdown without the intermediate generation of urea. The polypeptide is Ureidoglycolate hydrolase (Oryza sativa subsp. japonica (Rice)).